The primary structure comprises 480 residues: Probable histone deacetylase 1-A (480 aa).

Residues 10-321 (KVCYYYDGDV…WTYETAVALD (312 aa)) are histone deacetylase. The active site involves His141. The interval 388-480 (SIHDDSGEED…KRVKEETKSV (93 aa)) is disordered. Residues 401-416 (PDKRISIRSSDKRIAC) are compositionally biased toward basic and acidic residues. Residues 417–427 (DEEFSDSEDEG) are compositionally biased toward acidic residues. Positions 443–480 (VKTEEEKEGEDKKDVKEEEKAKDEKTDSKRVKEETKSV) are enriched in basic and acidic residues.

The protein belongs to the histone deacetylase family. HD type 1 subfamily. In terms of assembly, part of a large multiprotein complex that also contains RBBP4. Oocyte.

The protein resides in the nucleus. It localises to the cytoplasm. The catalysed reaction is N(6)-acetyl-L-lysyl-[histone] + H2O = L-lysyl-[histone] + acetate. It catalyses the reaction N(6)-acetyl-L-lysyl-[protein] + H2O = L-lysyl-[protein] + acetate. The enzyme catalyses N(6)-(2E)-butenoyl-L-lysyl-[protein] + H2O = (2E)-2-butenoate + L-lysyl-[protein]. In terms of biological role, histone deacetylase that catalyzes the deacetylation of lysine residues on the N-terminal part of the core histones (H2A, H2B, H3 and H4). Histone deacetylation gives a tag for epigenetic repression and plays an important role in transcriptional regulation, cell cycle progression and developmental events. Histone deacetylases act via the formation of large multiprotein complexes. Also functions as deacetylase for non-histone proteins. In addition to protein deacetylase activity, also has protein-lysine deacylase activity: acts as a protein decrotonylase by mediating decrotonylation ((2E)-butenoyl) of histones. The chain is Probable histone deacetylase 1-A (hdac1-a) from Xenopus laevis (African clawed frog).